Reading from the N-terminus, the 217-residue chain is Somatotropin (217 aa).

Residues 1 to 26 (MATGSHTTTLLLAVALLGLPWPQEAG) form the signal peptide. Histidine 46 provides a ligand contact to Zn(2+). Residues cysteine 79 and cysteine 190 are joined by a disulfide bond. Glutamate 199 provides a ligand contact to Zn(2+). The cysteines at positions 207 and 215 are disulfide-linked.

It belongs to the somatotropin/prolactin family.

The protein resides in the secreted. In terms of biological role, plays an important role in growth control. Its major role in stimulating body growth is to stimulate the liver and other tissues to secrete IGF1. It stimulates both the differentiation and proliferation of myoblasts. It also stimulates amino acid uptake and protein synthesis in muscle and other tissues. This Galago senegalensis (Northern lesser bushbaby) protein is Somatotropin (GH1).